We begin with the raw amino-acid sequence, 251 residues long: CDP-diacylglycerol pyrophosphatase (251 aa).

A helical membrane pass occupies residues 5 to 25 (GYFLLAVIVIVAAAGVGYWKF).

It belongs to the Cdh family.

It is found in the cell inner membrane. It catalyses the reaction a CDP-1,2-diacyl-sn-glycerol + H2O = a 1,2-diacyl-sn-glycero-3-phosphate + CMP + 2 H(+). The protein operates within phospholipid metabolism; CDP-diacylglycerol degradation; phosphatidate from CDP-diacylglycerol: step 1/1. The sequence is that of CDP-diacylglycerol pyrophosphatase from Salmonella paratyphi A (strain ATCC 9150 / SARB42).